The following is a 424-amino-acid chain: Adenylosuccinate synthetase (424 aa).

Residues 12-18 (GDEGKGK) and 40-42 (GHT) each bind GTP. The active-site Proton acceptor is the aspartate 13. Mg(2+) contacts are provided by aspartate 13 and glycine 40. IMP is bound by residues 13 to 16 (DEGK), 38 to 41 (NAGH), threonine 130, arginine 144, asparagine 220, threonine 235, and arginine 299. Histidine 41 (proton donor) is an active-site residue. 295–301 (VTTGRRR) serves as a coordination point for substrate. GTP is bound by residues arginine 301, 327 to 329 (KLD), and 412 to 414 (GTG).

The protein belongs to the adenylosuccinate synthetase family. As to quaternary structure, homodimer. It depends on Mg(2+) as a cofactor.

The protein resides in the cytoplasm. The enzyme catalyses IMP + L-aspartate + GTP = N(6)-(1,2-dicarboxyethyl)-AMP + GDP + phosphate + 2 H(+). Its pathway is purine metabolism; AMP biosynthesis via de novo pathway; AMP from IMP: step 1/2. Plays an important role in the de novo pathway and in the salvage pathway of purine nucleotide biosynthesis. Catalyzes the first committed step in the biosynthesis of AMP from IMP. The protein is Adenylosuccinate synthetase of Aspergillus fumigatus (strain CBS 144.89 / FGSC A1163 / CEA10) (Neosartorya fumigata).